The chain runs to 350 residues: tRNA uridine(34) hydroxylase (350 aa).

The region spanning 146 to 240 (DDPDAVFIDM…YARRAREQGL (95 aa)) is the Rhodanese domain. C200 functions as the Cysteine persulfide intermediate in the catalytic mechanism. Over residues 319 to 328 (RRRRAGRENG) the composition is skewed to basic and acidic residues. Residues 319 to 350 (RRRRAGRENGNKIFNKSRGRLNSKLSIPDPAE) are disordered.

This sequence belongs to the TrhO family.

It carries out the reaction uridine(34) in tRNA + AH2 + O2 = 5-hydroxyuridine(34) in tRNA + A + H2O. Functionally, catalyzes oxygen-dependent 5-hydroxyuridine (ho5U) modification at position 34 in tRNAs. The protein is tRNA uridine(34) hydroxylase of Salmonella typhi.